Here is a 75-residue protein sequence, read N- to C-terminus: Large ribosomal subunit protein bL31 (75 aa).

This sequence belongs to the bacterial ribosomal protein bL31 family. Type A subfamily. In terms of assembly, part of the 50S ribosomal subunit.

Functionally, binds the 23S rRNA. The chain is Large ribosomal subunit protein bL31 from Gluconobacter oxydans (strain 621H) (Gluconobacter suboxydans).